Reading from the N-terminus, the 458-residue chain is Major capsid protein (458 aa).

Positions 21–110 (LEGLTAAQKA…EIKSLLTARE (90 aa)) form a coiled coil.

Belongs to the HK97 phage major capsid protein family. As to quaternary structure, interacts with the decoration protein; each hexon binds a single copy of the decoration protein. Interacts with the portal protein. In terms of processing, the scaffolding domain delta is cleaved by the prohead protease and lost after assembly. The major capsid protein precursors together with both the portal complex and the maturation protease form prohead I. All copies of the major capsid protein precursor are cleaved to the mature major capsid protein by release of the scaffolding domain delta, yielding the metastable prohead II.

Its subcellular location is the virion. Major capsid protein that self-associates to form 120 hexamers and 11 pentamers, building the T=13 icosahedral capsid which about 860 Angstroms in diameter. Responsible for its self-assembly into a procapsid. The phage does not need to encode a separate scaffolfing protein because its capsid protein contains the delta domain that carries that function. The capsid gains its final stability through the reorganization of the subunits that takes place upon expansion. DNA encapsidation through the portal triggers capsid expansion and the binding of the decoration protein to the capsid exterior. Might play a role in counteracting the host Pycsar defense system that is mediated by pyrimidine cyclases and leads to abortive infection. The protein is Major capsid protein of Escherichia coli (Enterobacteria phage T5).